The following is a 440-amino-acid chain: 2-methylisoborneol synthase (440 aa).

2 disordered regions span residues 1–33 (MPDSGTLGTPPPEQGPTPPTTLPDVPAPVIPSA) and 46–74 (LHPPVTVPDPAPPPPPAPAAGNPPDTVTG). Composition is skewed to pro residues over residues 9 to 29 (TPPPEQGPTPPTTLPDVPAPV) and 50 to 63 (VTVPDPAPPPPPAP). Mg(2+) is bound by residues Asp-197, Asp-198, Glu-202, Asn-345, Ser-349, and Glu-353.

Belongs to the terpene synthase family. 2-methylisoborneol synthase subfamily. Mg(2+) is required as a cofactor.

It carries out the reaction (E)-2-methylgeranyl diphosphate + H2O = 2-methylisoborneol + diphosphate. Functionally, catalyzes the cyclization of 2-methylgeranyl diphosphate (2-MeGPP) to 2-methylisoborneol (2-MIB), which likely involves the intermediacy of 2-methyllinalyl diphosphate. Is also able to catalyze the cyclization of geranyl diphosphate (GPP), albeit with much lower efficiency, leading to the formation of a complex mixture of cyclic monoterpenes, consisting of alpha-pinene (6%), beta-pinene (23%), limonene (32%), gamma-terpinene (29%), and delta-terpinene (10%). This is 2-methylisoborneol synthase from Streptomyces coelicolor (strain ATCC BAA-471 / A3(2) / M145).